The following is a 267-amino-acid chain: Probable 3-methyl-2-oxobutanoate hydroxymethyltransferase (267 aa).

It belongs to the PanB family.

It carries out the reaction 3-methyl-2-oxobutanoate + (6R)-5,10-methylene-5,6,7,8-tetrahydrofolate + H2O = 2-dehydropantoate + (6S)-5,6,7,8-tetrahydrofolate. The protein operates within cofactor biosynthesis; (R)-pantothenate biosynthesis; (R)-pantoate from 3-methyl-2-oxobutanoate: step 1/2. This is Probable 3-methyl-2-oxobutanoate hydroxymethyltransferase from Schizosaccharomyces pombe (strain 972 / ATCC 24843) (Fission yeast).